Consider the following 68-residue polypeptide: Large ribosomal subunit protein bL28 (68 aa).

The tract at residues 1-30 (MAKICDHCGKKPQSGNNVSHANNKSKRRFE) is disordered. Residues 13-22 (QSGNNVSHAN) are compositionally biased toward polar residues.

Belongs to the bacterial ribosomal protein bL28 family.

In Solidesulfovibrio magneticus (strain ATCC 700980 / DSM 13731 / RS-1) (Desulfovibrio magneticus), this protein is Large ribosomal subunit protein bL28.